Consider the following 102-residue polypeptide: MILLKSEHGGKRKEMRQDDLMGPNHFSLRIMYKIIIYTYPVSLYAVKELNLSKTFSISALGILNSNSNRSPAKKQTFFSACVAKSYSSFFISICILDLASHL.

Residues 77 to 96 (FFSACVAKSYSSFFISICIL) form a helical membrane-spanning segment.

The protein localises to the membrane. This is an uncharacterized protein from Saccharomyces cerevisiae (strain ATCC 204508 / S288c) (Baker's yeast).